Reading from the N-terminus, the 103-residue chain is Phosphoribosyl-ATP pyrophosphatase (103 aa).

This sequence belongs to the PRA-PH family.

The protein localises to the cytoplasm. The enzyme catalyses 1-(5-phospho-beta-D-ribosyl)-ATP + H2O = 1-(5-phospho-beta-D-ribosyl)-5'-AMP + diphosphate + H(+). It participates in amino-acid biosynthesis; L-histidine biosynthesis; L-histidine from 5-phospho-alpha-D-ribose 1-diphosphate: step 2/9. In Listeria monocytogenes serotype 4b (strain CLIP80459), this protein is Phosphoribosyl-ATP pyrophosphatase.